The sequence spans 34 residues: Photosystem II reaction center protein Psb30 (34 aa).

The helical transmembrane segment at 6-26 threads the bilayer; sequence VIGQLIATGAIMLAGPAVIVL.

It belongs to the Psb30/Ycf12 family. In terms of assembly, PSII is composed of 1 copy each of membrane proteins PsbA, PsbB, PsbC, PsbD, PsbE, PsbF, PsbH, PsbI, PsbJ, PsbK, PsbL, PsbM, PsbT, PsbX, PsbY, PsbZ, Psb30/Ycf12, peripheral proteins of the oxygen-evolving complex and a large number of cofactors. It forms dimeric complexes.

The protein resides in the plastid. It is found in the chloroplast thylakoid membrane. Functionally, a core subunit of photosystem II (PSII), probably helps stabilize the reaction center. This chain is Photosystem II reaction center protein Psb30, found in Trieres chinensis (Marine centric diatom).